Reading from the N-terminus, the 398-residue chain is Argininosuccinate synthase (398 aa).

Residue 8–16 (AYSGGLDTT) participates in ATP binding. Residue Tyr87 participates in L-citrulline binding. Residue Gly117 participates in ATP binding. Residues Thr119, Asn123, and Asp124 each contribute to the L-aspartate site. Position 123 (Asn123) interacts with L-citrulline. Arg127, Ser175, Glu259, and Tyr271 together coordinate L-citrulline.

Belongs to the argininosuccinate synthase family. Type 1 subfamily. As to quaternary structure, homotetramer.

The protein localises to the cytoplasm. It carries out the reaction L-citrulline + L-aspartate + ATP = 2-(N(omega)-L-arginino)succinate + AMP + diphosphate + H(+). Its pathway is amino-acid biosynthesis; L-arginine biosynthesis; L-arginine from L-ornithine and carbamoyl phosphate: step 2/3. The sequence is that of Argininosuccinate synthase from Corynebacterium jeikeium (strain K411).